The following is a 345-amino-acid chain: DNA-directed RNA polymerases I and III subunit rpac1 (345 aa).

Over residues 1–11 (MVNKSTTNGVS) the composition is skewed to polar residues. A disordered region spans residues 1 to 20 (MVNKSTTNGVSDPNLENKRT).

This sequence belongs to the archaeal Rpo3/eukaryotic RPB3 RNA polymerase subunit family. As to quaternary structure, component of the RNA polymerase I (Pol I) and RNA polymerase III (Pol III) complexes consisting of at least 13 and 17 subunits, respectively. Interacts with RPAC19/RPAC2.

The protein localises to the nucleus. In terms of biological role, DNA-dependent RNA polymerase catalyzes the transcription of DNA into RNA using the four ribonucleoside triphosphates as substrates. Common component of RNA polymerases I and III which synthesize ribosomal RNA precursors and small RNAs, such as 5S rRNA and tRNAs, respectively. RPAC1 is part of the Pol core element with the central large cleft and probably a clamp element that moves to open and close the cleft. This is DNA-directed RNA polymerases I and III subunit rpac1 (polr1c) from Dictyostelium discoideum (Social amoeba).